Reading from the N-terminus, the 421-residue chain is Zinc finger protein 584 (421 aa).

In terms of domain architecture, KRAB spans 17 to 88 (VMFEDVTVYF…SWVDVTPVSR (72 aa)). Positions 120 to 129 (QHQDTHSEGK) are enriched in basic and acidic residues. A disordered region spans residues 120-146 (QHQDTHSEGKPRRHTEHGAAFPPGSSC). 8 consecutive C2H2-type zinc fingers follow at residues 159–181 (FKCS…LITH), 214–236 (HVCN…QKVH), 242–264 (FKCS…QRIH), 270–292 (YECS…RKVH), 298–320 (YECT…QRVH), 326–348 (FECK…WKVH), 354–376 (YECS…QQFH), and 382–404 (YECT…KKVH). The tract at residues 402 to 421 (KVHTPERRQEDRAHGKVVSC) is disordered. Residues 404–415 (HTPERRQEDRAH) show a composition bias toward basic and acidic residues.

It belongs to the krueppel C2H2-type zinc-finger protein family.

The protein localises to the nucleus. Functionally, may be involved in transcriptional regulation. The chain is Zinc finger protein 584 (ZNF584) from Homo sapiens (Human).